The primary structure comprises 244 residues: NAD(P)H-quinone oxidoreductase subunit K (244 aa).

[4Fe-4S] cluster is bound by residues Cys60, Cys61, Cys125, and Cys156. Positions 213–244 (TSANSIPSSKKEKITELPDNNEKAEIIDTLEN) are disordered. Basic and acidic residues predominate over residues 221 to 238 (SKKEKITELPDNNEKAEI).

It belongs to the complex I 20 kDa subunit family. As to quaternary structure, NDH-1 can be composed of about 15 different subunits; different subcomplexes with different compositions have been identified which probably have different functions. [4Fe-4S] cluster is required as a cofactor.

Its subcellular location is the cellular thylakoid membrane. It carries out the reaction a plastoquinone + NADH + (n+1) H(+)(in) = a plastoquinol + NAD(+) + n H(+)(out). It catalyses the reaction a plastoquinone + NADPH + (n+1) H(+)(in) = a plastoquinol + NADP(+) + n H(+)(out). In terms of biological role, NDH-1 shuttles electrons from an unknown electron donor, via FMN and iron-sulfur (Fe-S) centers, to quinones in the respiratory and/or the photosynthetic chain. The immediate electron acceptor for the enzyme in this species is believed to be plastoquinone. Couples the redox reaction to proton translocation, and thus conserves the redox energy in a proton gradient. Cyanobacterial NDH-1 also plays a role in inorganic carbon-concentration. In Prochlorococcus marinus (strain MIT 9301), this protein is NAD(P)H-quinone oxidoreductase subunit K.